Consider the following 166-residue polypeptide: Protein UL5 (166 aa).

This sequence belongs to the RL11 family. As to quaternary structure, interacts with host IQGAP1.

Its subcellular location is the host cytoplasm. In terms of biological role, may play a role in rearrangement of cellular cytoskeleton towards an efficient viral assembly and spreading. The chain is Protein UL5 (UL5) from Human cytomegalovirus (strain AD169) (HHV-5).